A 525-amino-acid polypeptide reads, in one-letter code: MSFVIAAPEFLTAAAMDLASIGSTVSAASAAASAPTVAILAAGADEVSIAVAALFGMHGQAYQALSVQASAFHQQFVQALTAGAYSYASAEAAAVTPLQQLVDVINAPFRSALGRPLIGNGANGKPGTGQDGGAGGLLYGSGGNGGSGLAGSGQKGGNGGAAGLFGNGGAGGAGASNQAGNGGAGGNGGAGGLIWGTAGTGGNGGFTTFLDAAGGAGGAGGAGGLFGAGGAGGVGGAALGGGAQAAGGNGGAGGVGGLFGAGGAGGAGGFSDTGGTGGAGGAGGLFGPGGGSGGVGGFGDTGGTGGDGGSGGLFGVGGAGGHGGFGSAAGGDGGAGGAGGTVFGSGGAGGAGGVATVAGHGGHGGNAGLLYGTGGAGGAGGFGGFGGDGGDGGIGGLVGSGGAGGSGGTGTLSGGRGGAGGNAGTFYGSGGAGGAGGESDNGDGGNGGVGGKAGLVGEGGNGGDGGATIAGKGGSGGNGGNAWLTGQGGNGGNAAFGKAGTGSVGVGGAGGLLEGQNGENGLLPS.

Residues 1-93 (MSFVIAAPEF…AYSYASAEAA (93 aa)) form the PE domain. The interval 506–525 (VGGAGGLLEGQNGENGLLPS) is disordered. Positions 514–525 (EGQNGENGLLPS) are enriched in low complexity.

Belongs to the mycobacterial PE family. PGRS subfamily.

The protein localises to the secreted. Its subcellular location is the cell surface. It localises to the host cytoplasm. The protein resides in the host cytosol. Contributes to evasion of both innate and adaptive immunity. Inhibits autophagy in infected host phagocytes and inhibits major histocompatibility complex (MHC) class II antigen presentation by mycobacteria-infected dendritic cells. Has an important role in the growth and survival of M.tuberculosis, particularly during intracellular growth and in the later chronic phase of infection. The protein is PE-PGRS family protein PE_PGRS47 of Mycobacterium tuberculosis (strain ATCC 25618 / H37Rv).